Here is a 405-residue protein sequence, read N- to C-terminus: MEYTEVMVRYGELSTKGKNRKDFINRLATNVERVLKDFPQIEFHPRHDRMHIILNGAPFTEVDKRLKKVFGIQTYSPAIKIPKTLEDIEKTSLELMKETFKPGMTFKINTKRSDHKFEYDTNQLNNLVGDFLFDNIDNLKAEMKHPDLVLRIEVRQDAVYISNQLLHGVGGMPVGTAGKAVMMLSGGIDSPVASWLALKRGVDIEMVHFFSPPYTTEKALAKAKELTGILANYAGKINFIAVPFAEIQETIKEKLPEGYLMTVQRRFMLQLADRIRAMRGGLAIFNGESVGQVASQTLESMVAINDVTTTPVIRPVATMDKTEIIAKAEEIGTFDLSIQPFEDCCTIFAPPRPKTKPKLDKAREYEARLDVEGLIQRALDGIEVMPIYPNQKFLDDKAQEDADLL.

Residues 60–165 (TEVDKRLKKV…QDAVYISNQL (106 aa)) form the THUMP domain. Residues 183-184 (ML), 208-209 (HF), arginine 265, glycine 287, and glutamine 296 contribute to the ATP site.

This sequence belongs to the ThiI family.

The protein resides in the cytoplasm. The enzyme catalyses [ThiI sulfur-carrier protein]-S-sulfanyl-L-cysteine + a uridine in tRNA + 2 reduced [2Fe-2S]-[ferredoxin] + ATP + H(+) = [ThiI sulfur-carrier protein]-L-cysteine + a 4-thiouridine in tRNA + 2 oxidized [2Fe-2S]-[ferredoxin] + AMP + diphosphate. The catalysed reaction is [ThiS sulfur-carrier protein]-C-terminal Gly-Gly-AMP + S-sulfanyl-L-cysteinyl-[cysteine desulfurase] + AH2 = [ThiS sulfur-carrier protein]-C-terminal-Gly-aminoethanethioate + L-cysteinyl-[cysteine desulfurase] + A + AMP + 2 H(+). It participates in cofactor biosynthesis; thiamine diphosphate biosynthesis. In terms of biological role, catalyzes the ATP-dependent transfer of a sulfur to tRNA to produce 4-thiouridine in position 8 of tRNAs, which functions as a near-UV photosensor. Also catalyzes the transfer of sulfur to the sulfur carrier protein ThiS, forming ThiS-thiocarboxylate. This is a step in the synthesis of thiazole, in the thiamine biosynthesis pathway. The sulfur is donated as persulfide by IscS. This is Probable tRNA sulfurtransferase from Lactobacillus acidophilus (strain ATCC 700396 / NCK56 / N2 / NCFM).